Consider the following 442-residue polypeptide: Thymidine phosphorylase (442 aa).

It belongs to the thymidine/pyrimidine-nucleoside phosphorylase family. In terms of assembly, homodimer.

The enzyme catalyses thymidine + phosphate = 2-deoxy-alpha-D-ribose 1-phosphate + thymine. It participates in pyrimidine metabolism; dTMP biosynthesis via salvage pathway; dTMP from thymine: step 1/2. The enzymes which catalyze the reversible phosphorolysis of pyrimidine nucleosides are involved in the degradation of these compounds and in their utilization as carbon and energy sources, or in the rescue of pyrimidine bases for nucleotide synthesis. This chain is Thymidine phosphorylase, found in Vibrio vulnificus (strain CMCP6).